The sequence spans 873 residues: Nonsense-mediated mRNA decay factor SMG8 (873 aa).

The disordered stretch occupies residues Ala-531–Glu-604. A compositionally biased stretch (acidic residues) spans Glu-540–Ile-550. Composition is skewed to low complexity over residues Pro-551 to Pro-562 and Ser-574 to Ser-583. A compositionally biased stretch (basic and acidic residues) spans Ser-591–Glu-604.

It belongs to the SMG8 family.

Involved in nonsense-mediated decay (NMD) of mRNAs containing premature stop codons. Probable component of kinase complex containing smg-1 and recruited to stalled ribosomes. The polypeptide is Nonsense-mediated mRNA decay factor SMG8 (smg-8) (Caenorhabditis elegans).